The sequence spans 491 residues: Ketol-acid reductoisomerase (NADP(+)) (491 aa).

In terms of domain architecture, KARI N-terminal Rossmann spans 15-208 (AQLGKCRFMG…GGHRAGVLES (194 aa)). Residues 45-48 (CGAQ), R68, R76, S78, and 108-110 (DKQ) contribute to the NADP(+) site. H132 is a catalytic residue. G158 contributes to the NADP(+) binding site. 2 KARI C-terminal knotted domains span residues 209–344 (SFVA…TAPQ) and 345–484 (YEGK…MTDM). D217, E221, E389, and E393 together coordinate Mg(2+). S414 serves as a coordination point for substrate.

Belongs to the ketol-acid reductoisomerase family. It depends on Mg(2+) as a cofactor.

The enzyme catalyses (2R)-2,3-dihydroxy-3-methylbutanoate + NADP(+) = (2S)-2-acetolactate + NADPH + H(+). The catalysed reaction is (2R,3R)-2,3-dihydroxy-3-methylpentanoate + NADP(+) = (S)-2-ethyl-2-hydroxy-3-oxobutanoate + NADPH + H(+). It functions in the pathway amino-acid biosynthesis; L-isoleucine biosynthesis; L-isoleucine from 2-oxobutanoate: step 2/4. Its pathway is amino-acid biosynthesis; L-valine biosynthesis; L-valine from pyruvate: step 2/4. Involved in the biosynthesis of branched-chain amino acids (BCAA). Catalyzes an alkyl-migration followed by a ketol-acid reduction of (S)-2-acetolactate (S2AL) to yield (R)-2,3-dihydroxy-isovalerate. In the isomerase reaction, S2AL is rearranged via a Mg-dependent methyl migration to produce 3-hydroxy-3-methyl-2-ketobutyrate (HMKB). In the reductase reaction, this 2-ketoacid undergoes a metal-dependent reduction by NADPH to yield (R)-2,3-dihydroxy-isovalerate. This chain is Ketol-acid reductoisomerase (NADP(+)), found in Salmonella typhimurium (strain LT2 / SGSC1412 / ATCC 700720).